Here is a 154-residue protein sequence, read N- to C-terminus: UPF0225 protein YPDSF_0962 (154 aa).

This sequence belongs to the UPF0225 family.

This is UPF0225 protein YPDSF_0962 from Yersinia pestis (strain Pestoides F).